The sequence spans 86 residues: Putative defensin-like protein 234 (86 aa).

Residues 1–26 (MRSATLLLVSCVLLSFILGNVKEVEA) form the signal peptide. 4 disulfide bridges follow: cysteine 34–cysteine 86, cysteine 44–cysteine 71, cysteine 52–cysteine 80, and cysteine 69–cysteine 82.

Belongs to the DEFL family.

Its subcellular location is the secreted. In Arabidopsis thaliana (Mouse-ear cress), this protein is Putative defensin-like protein 234 (SCRL14).